The chain runs to 511 residues: Maturase K (511 aa).

It belongs to the intron maturase 2 family. MatK subfamily.

The protein resides in the plastid. It is found in the chloroplast. Usually encoded in the trnK tRNA gene intron. Probably assists in splicing its own and other chloroplast group II introns. The protein is Maturase K of Hordeum bulbosum (Bulbous barley).